The chain runs to 250 residues: Uracil-DNA glycosylase (250 aa).

Asp78 serves as the catalytic Proton acceptor. A disordered region spans residues 228 to 250; it reads RGQKPVDWSGEQNNASRQGKFAL.

It belongs to the uracil-DNA glycosylase (UDG) superfamily. UNG family.

The protein localises to the cytoplasm. It carries out the reaction Hydrolyzes single-stranded DNA or mismatched double-stranded DNA and polynucleotides, releasing free uracil.. In terms of biological role, excises uracil residues from the DNA which can arise as a result of misincorporation of dUMP residues by DNA polymerase or due to deamination of cytosine. This Bordetella bronchiseptica (strain ATCC BAA-588 / NCTC 13252 / RB50) (Alcaligenes bronchisepticus) protein is Uracil-DNA glycosylase.